The sequence spans 609 residues: Alpha-glycerophosphate oxidase (609 aa).

21–49 (DLLVIGGGITGAGLTLQAAAAGMKVAVLE) is an FAD binding site.

Belongs to the FAD-dependent glycerol-3-phosphate dehydrogenase family. FAD serves as cofactor.

It is found in the cytoplasm. It catalyses the reaction sn-glycerol 3-phosphate + O2 = dihydroxyacetone phosphate + H2O2. The sequence is that of Alpha-glycerophosphate oxidase (glpO) from Lactococcus lactis subsp. lactis (strain IL1403) (Streptococcus lactis).